Here is a 439-residue protein sequence, read N- to C-terminus: Methylenetetrahydrofolate--tRNA-(uracil-5-)-methyltransferase TrmFO (439 aa).

8-13 (GAGLAG) is a binding site for FAD.

Belongs to the MnmG family. TrmFO subfamily. FAD is required as a cofactor.

The protein localises to the cytoplasm. It carries out the reaction uridine(54) in tRNA + (6R)-5,10-methylene-5,6,7,8-tetrahydrofolate + NADH + H(+) = 5-methyluridine(54) in tRNA + (6S)-5,6,7,8-tetrahydrofolate + NAD(+). The enzyme catalyses uridine(54) in tRNA + (6R)-5,10-methylene-5,6,7,8-tetrahydrofolate + NADPH + H(+) = 5-methyluridine(54) in tRNA + (6S)-5,6,7,8-tetrahydrofolate + NADP(+). Functionally, catalyzes the folate-dependent formation of 5-methyl-uridine at position 54 (M-5-U54) in all tRNAs. The sequence is that of Methylenetetrahydrofolate--tRNA-(uracil-5-)-methyltransferase TrmFO from Magnetococcus marinus (strain ATCC BAA-1437 / JCM 17883 / MC-1).